The chain runs to 148 residues: Glutamyl-tRNA(Gln) amidotransferase subunit C, mitochondrial (148 aa).

It belongs to the GatC family. Subunit of the heterotrimeric GatCAB amidotransferase (AdT) complex, composed of A, B and C subunits.

It localises to the mitochondrion. The catalysed reaction is L-glutamyl-tRNA(Gln) + L-glutamine + ATP + H2O = L-glutaminyl-tRNA(Gln) + L-glutamate + ADP + phosphate + H(+). Its function is as follows. Allows the formation of correctly charged Gln-tRNA(Gln) through the transamidation of misacylated Glu-tRNA(Gln) in the mitochondria. The reaction takes place in the presence of glutamine and ATP through an activated gamma-phospho-Glu-tRNA(Gln). This Drosophila yakuba (Fruit fly) protein is Glutamyl-tRNA(Gln) amidotransferase subunit C, mitochondrial.